A 227-amino-acid polypeptide reads, in one-letter code: Probable septum site-determining protein MinC (227 aa).

Belongs to the MinC family. In terms of assembly, interacts with MinD and FtsZ.

Functionally, cell division inhibitor that blocks the formation of polar Z ring septums. Rapidly oscillates between the poles of the cell to destabilize FtsZ filaments that have formed before they mature into polar Z rings. Prevents FtsZ polymerization. This is Probable septum site-determining protein MinC from Laribacter hongkongensis (strain HLHK9).